The primary structure comprises 155 residues: UPF0461 protein C5orf24 homolog (155 aa).

Polar residues predominate over residues 1–10 (MMHPVASSNP). Residues 1-20 (MMHPVASSNPAFCGPGKPSC) form a disordered region. Ser-37 is subject to Phosphoserine. The segment at 40 to 155 (SKYSHTVNHK…QQAFRCSSDA (116 aa)) is disordered. Polar residues predominate over residues 57–70 (DPLNETHLQTTSGR). A Glycyl lysine isopeptide (Lys-Gly) (interchain with G-Cter in SUMO2) cross-link involves residue Lys-75. Positions 80–92 (KKKNLNRSGKRGR) are enriched in basic residues. The segment covering 94–107 (SGTTKSAGYRTSTG) has biased composition (polar residues). Ser-121 carries the post-translational modification Phosphoserine.

It belongs to the UPF0461 family.

In Pongo abelii (Sumatran orangutan), this protein is UPF0461 protein C5orf24 homolog.